A 509-amino-acid polypeptide reads, in one-letter code: Protein disulfide-isomerase (509 aa).

The first 18 residues, 1-18 (MLRRAVLCLALAVTAGWA), serve as a signal peptide directing secretion. The Thioredoxin 1 domain maps to 19-135 (WAAEEEDNVL…IVNWLKKRTG (117 aa)). Catalysis depends on nucleophile residues Cys-54 and Cys-57. The cysteines at positions 54 and 57 are disulfide-linked. N6-succinyllysine is present on residues Lys-223 and Lys-272. Phosphoserine is present on residues Ser-332 and Ser-358. The region spanning 347–476 (FLEGKIKPHL…FKKFLESGGQ (130 aa)) is the Thioredoxin 2 domain. Catalysis depends on nucleophile residues Cys-398 and Cys-401. Cys-398 and Cys-401 are oxidised to a cystine. Ser-428 carries the phosphoserine modification. The disordered stretch occupies residues 471-509 (LESGGQDGAGDEDGLEDLEEAEEPDLEEDDDQKAVRDEL). Residues 479–501 (AGDEDGLEDLEEAEEPDLEEDDD) are compositionally biased toward acidic residues. Residues 506–509 (RDEL) carry the Prevents secretion from ER motif.

The protein belongs to the protein disulfide isomerase family. In terms of assembly, heterodimer; heterodimerizes with the protein microsomal triglyceride transfer MTTP. Homodimer. Monomers and homotetramers may also occur. Interacts with P4HA2, forming a heterotetramer consisting of 2 alpha subunits (P4HA2) and 2 beta (P4HB), where P4HB plays the role of a structural subunit; this tetramer catalyzes the formation of 4-hydroxyproline in collagen. Also constitutes the structural subunit of the microsomal triacylglycerol transfer protein MTTP in mammalian cells. Stabilizes both enzymes and retain them in the ER without contributing to the catalytic activity. Binds UBQLN1. Interacts with ERO1B. Interacts with ILDR2. Interacts with ERN1/IRE1A (via N-terminus); the interaction is enhanced by phosphorylation of P4HB by FAM20C in response to endoplasmic reticulum stress and results in attenuation of ERN1 activity. Post-translationally, phosphorylation of Ser-358 by FAM20C is induced by endoplasmic reticulum stress and results in a functional switch from oxidoreductase to molecular chaperone. It also promotes interaction with ERN1.

The protein resides in the endoplasmic reticulum. The protein localises to the endoplasmic reticulum lumen. Its subcellular location is the melanosome. It localises to the cell membrane. The enzyme catalyses Catalyzes the rearrangement of -S-S- bonds in proteins.. Its function is as follows. This multifunctional protein catalyzes the formation, breakage and rearrangement of disulfide bonds. At the cell surface, seems to act as a reductase that cleaves disulfide bonds of proteins attached to the cell. May therefore cause structural modifications of exofacial proteins. Inside the cell, seems to form/rearrange disulfide bonds of nascent proteins. At high concentrations and following phosphorylation by FAM20C, functions as a chaperone that inhibits aggregation of misfolded proteins. At low concentrations, facilitates aggregation (anti-chaperone activity). May be involved with other chaperones in the structural modification of the TG precursor in hormone biogenesis. Also acts as a structural subunit of various enzymes such as prolyl 4-hydroxylase and microsomal triacylglycerol transfer protein MTTP. Receptor for LGALS9; the interaction retains P4HB at the cell surface of Th2 T helper cells, increasing disulfide reductase activity at the plasma membrane, altering the plasma membrane redox state and enhancing cell migration. The sequence is that of Protein disulfide-isomerase (P4HB) from Oryctolagus cuniculus (Rabbit).